A 412-amino-acid chain; its full sequence is FAD-dependent monooxygenase nscC (412 aa).

Residues 1 to 21 (MGKQQETILIIGAGIAGLTTS) form the signal peptide. Positions 35 and 46 each coordinate FAD. N-linked (GlcNAc...) asparagine glycosylation is present at asparagine 92. Position 119 (arginine 119) interacts with FAD. N-linked (GlcNAc...) asparagine glycosylation is found at asparagine 170 and asparagine 231. 2 residues coordinate FAD: aspartate 326 and glycine 339.

It belongs to the paxM FAD-dependent monooxygenase family. Requires FAD as cofactor.

It functions in the pathway secondary metabolite biosynthesis. FAD-dependent monooxygenase; part of the gene cluster that mediates the biosynthesis of neosartoricin B, a prenylated anthracenone that probably exhibits T-cell antiproliferative activity, suggestive of a physiological role as an immunosuppressive agent. The non-reducing polyketide synthase nscA probably synthesizes and cyclizes the decaketide backbone. The hydrolase nscB then mediates the product release through hydrolysis followed by spontaneous decarboxylation. The prenyltransferase nscD catalyzes the addition of the dimethylallyl group to the aromatic C5. The FAD-dependent monooxygenase nscC is then responsible for the stereospecific hydroxylation at C2. Neosartoricin B can be converted into two additional compounds neosartoricins C and D. Neosartoricin C is a spirocyclic compound that is cyclized through the attack of C3 hydroxyl on C14, followed by dehydration. On the other hand, neosartoricin D is a further cyclized compound in which attack of C2 on C14 in neosartoricin C results in the formation of the acetal-containing dioxabicyclo-octanone ring. Both of these compounds are novel and possibly represent related metabolites of the gene cluster. This chain is FAD-dependent monooxygenase nscC, found in Trichophyton verrucosum (strain HKI 0517).